Reading from the N-terminus, the 144-residue chain is Peptide methionine sulfoxide reductase MsrB (144 aa).

The MsrB domain occupies 5–127 (KEEKIKSLNR…NSAALRFIPK (123 aa)). Residue Cys116 is the Nucleophile of the active site.

It belongs to the MsrB Met sulfoxide reductase family.

The enzyme catalyses L-methionyl-[protein] + [thioredoxin]-disulfide + H2O = L-methionyl-(R)-S-oxide-[protein] + [thioredoxin]-dithiol. The polypeptide is Peptide methionine sulfoxide reductase MsrB (Bacillus velezensis (strain DSM 23117 / BGSC 10A6 / LMG 26770 / FZB42) (Bacillus amyloliquefaciens subsp. plantarum)).